The primary structure comprises 686 residues: DNA gyrase subunit B (686 aa).

A compositionally biased stretch (polar residues) spans methionine 1–glycine 27. Positions methionine 1–alanine 29 are disordered. One can recognise a Toprim domain in the interval cysteine 465–proline 579. Residues glutamate 471, aspartate 544, and aspartate 546 each coordinate Mg(2+).

The protein belongs to the type II topoisomerase GyrB family. As to quaternary structure, heterotetramer, composed of two GyrA and two GyrB chains. In the heterotetramer, GyrA contains the active site tyrosine that forms a transient covalent intermediate with DNA, while GyrB binds cofactors and catalyzes ATP hydrolysis. It depends on Mg(2+) as a cofactor. Requires Mn(2+) as cofactor. Ca(2+) is required as a cofactor.

It localises to the cytoplasm. It carries out the reaction ATP-dependent breakage, passage and rejoining of double-stranded DNA.. In terms of biological role, a type II topoisomerase that negatively supercoils closed circular double-stranded (ds) DNA in an ATP-dependent manner to modulate DNA topology and maintain chromosomes in an underwound state. Negative supercoiling favors strand separation, and DNA replication, transcription, recombination and repair, all of which involve strand separation. Also able to catalyze the interconversion of other topological isomers of dsDNA rings, including catenanes and knotted rings. Type II topoisomerases break and join 2 DNA strands simultaneously in an ATP-dependent manner. The protein is DNA gyrase subunit B of Streptomyces coelicolor (strain ATCC BAA-471 / A3(2) / M145).